A 267-amino-acid chain; its full sequence is 4-hydroxy-tetrahydrodipicolinate reductase (267 aa).

NAD(+) is bound by residues 8-13 (GAAGRM) and Glu34. Arg35 is an NADP(+) binding site. NAD(+) is bound by residues 98-100 (GST) and 122-125 (APNM). His155 serves as the catalytic Proton donor/acceptor. His156 provides a ligand contact to (S)-2,3,4,5-tetrahydrodipicolinate. The active-site Proton donor is the Lys159. 165–166 (GT) contacts (S)-2,3,4,5-tetrahydrodipicolinate.

The protein belongs to the DapB family.

The protein resides in the cytoplasm. It catalyses the reaction (S)-2,3,4,5-tetrahydrodipicolinate + NAD(+) + H2O = (2S,4S)-4-hydroxy-2,3,4,5-tetrahydrodipicolinate + NADH + H(+). The enzyme catalyses (S)-2,3,4,5-tetrahydrodipicolinate + NADP(+) + H2O = (2S,4S)-4-hydroxy-2,3,4,5-tetrahydrodipicolinate + NADPH + H(+). It functions in the pathway amino-acid biosynthesis; L-lysine biosynthesis via DAP pathway; (S)-tetrahydrodipicolinate from L-aspartate: step 4/4. In terms of biological role, catalyzes the conversion of 4-hydroxy-tetrahydrodipicolinate (HTPA) to tetrahydrodipicolinate. This Pelobacter propionicus (strain DSM 2379 / NBRC 103807 / OttBd1) protein is 4-hydroxy-tetrahydrodipicolinate reductase.